We begin with the raw amino-acid sequence, 352 residues long: Serine/threonine-protein phosphatase 2A activator 2 (352 aa).

This sequence belongs to the PTPA-type PPIase family.

It is found in the cytoplasm. It carries out the reaction [protein]-peptidylproline (omega=180) = [protein]-peptidylproline (omega=0). Its function is as follows. PPIases accelerate the folding of proteins. It catalyzes the cis-trans isomerization of proline imidic peptide bonds in oligopeptides. Acts as a regulatory subunit for PP2A-like phosphatases modulating their activity or substrate specificity, probably by inducing a conformational change in the catalytic subunit, a direct target of the PPIase. Can reactivate inactive phosphatase PP2A-phosphatase methylesterase complexes (PP2Ai) in presence of ATP and Mg(2+) by dissociating the inactive form from the complex. This is Serine/threonine-protein phosphatase 2A activator 2 (rrd2) from Schizosaccharomyces pombe (strain 972 / ATCC 24843) (Fission yeast).